The sequence spans 185 residues: Heavy metal-associated isoprenylated plant protein 11 (185 aa).

The HMA domain maps to 39–106 (QQNTNVVFKL…ICKHVAIIAA (68 aa)). The span at 109 to 158 (IREPEQNRNPVTRREPNREPEQNRSRVTRREPSREPEPNRAPLARRESRP) shows a compositional bias: basic and acidic residues. The disordered stretch occupies residues 109-185 (IREPEQNRNP…GENSDGCIIM (77 aa)). Residue Cys-182 is modified to Cysteine methyl ester. Cys-182 is lipidated: S-farnesyl cysteine. The propeptide at 183–185 (IIM) is removed in mature form.

The protein belongs to the HIPP family.

Probable heavy-metal-binding protein. The polypeptide is Heavy metal-associated isoprenylated plant protein 11 (Arabidopsis thaliana (Mouse-ear cress)).